The following is a 67-amino-acid chain: Ranatuerin-2Vb (67 aa).

A signal peptide spans 1–22; that stretch reads MFTLKKSFLLLFFLGTITLSLC. Positions 23–39 are excised as a propeptide; it reads EEERGADDDDGEEEVKR. An intrachain disulfide couples Cys-62 to Cys-67.

In terms of tissue distribution, expressed by the skin glands.

Its subcellular location is the secreted. Functionally, antimicrobial peptide. The protein is Ranatuerin-2Vb of Odorrana versabilis (Chinese bamboo leaf odorous frog).